The primary structure comprises 161 residues: Allophycocyanin alpha chain (161 aa).

Residue N71 is modified to N4-methylasparagine. C81 serves as a coordination point for (2R,3E)-phycocyanobilin.

This sequence belongs to the phycobiliprotein family. As to quaternary structure, heterodimer of an alpha and a beta chain. In terms of processing, contains one covalently linked phycocyanobilin chromophore.

It localises to the plastid. It is found in the chloroplast thylakoid membrane. Light-harvesting photosynthetic bile pigment-protein from the phycobiliprotein complex. Allophycocyanin has a maximum absorption at approximately 650 nanometers. This is Allophycocyanin alpha chain (apcA) from Galdieria sulphuraria (Red alga).